The primary structure comprises 200 residues: Recombination protein RecR (200 aa).

The C4-type zinc-finger motif lies at 59 to 74 (CDICGNVCESSPCPVC). A Toprim domain is found at 82-177 (SVICVVEEPK…KVTRLASGLP (96 aa)).

It belongs to the RecR family.

Its function is as follows. May play a role in DNA repair. It seems to be involved in an RecBC-independent recombinational process of DNA repair. It may act with RecF and RecO. This Bifidobacterium longum (strain DJO10A) protein is Recombination protein RecR.